The following is a 248-amino-acid chain: ATP synthase subunit a, chloroplastic (248 aa).

5 helical membrane passes run 37 to 57 (AQVL…AILA), 96 to 116 (VPFI…GALL), 134 to 154 (DINT…YAGL), 200 to 220 (LVVA…MMFL), and 221 to 241 (GLFT…AYIG).

This sequence belongs to the ATPase A chain family. In terms of assembly, F-type ATPases have 2 components, CF(1) - the catalytic core - and CF(0) - the membrane proton channel. CF(1) has five subunits: alpha(3), beta(3), gamma(1), delta(1), epsilon(1). CF(0) has four main subunits: a, b, b' and c.

It is found in the plastid. It localises to the chloroplast thylakoid membrane. In terms of biological role, key component of the proton channel; it plays a direct role in the translocation of protons across the membrane. This Anthoceros angustus (Hornwort) protein is ATP synthase subunit a, chloroplastic.